Reading from the N-terminus, the 742-residue chain is Collectin-12 (742 aa).

Topologically, residues 1 to 37 are cytoplasmic; it reads MKDDFAEEEEVQSFGYKRFGIQEGTQCTKCKNNWALK. The chain crosses the membrane as a helical; Signal-anchor for type II membrane protein span at residues 38 to 58; that stretch reads FSIILLYVLCALLTITVAILG. The Extracellular portion of the chain corresponds to 59–742; the sequence is YKVVEKMDTV…EREAVPSSIL (684 aa). Positions 104 to 142 form a coiled coil; sequence TNSELSTFRSDILDLRQQLQEITEKTSKNKDMLEKLQAN. N159, N168, and N271 each carry an N-linked (GlcNAc...) asparagine glycan. Residues 220–301 adopt a coiled-coil conformation; it reads ITNLQRSVDD…SFTGQMDNIT (82 aa). The segment at 439-608 is disordered; it reads TILQGPPGPR…TPASEVNGCP (170 aa). Collagen-like domains follow at residues 452–511 and 527–586; these read GDRG…KGSR and GPPG…PGPS. Over residues 501–514 the composition is skewed to low complexity; that stretch reads SKGSQGPKGSRGSP. The segment covering 516–532 has biased composition (pro residues); that stretch reads KPGPQGPSGDPGPPGPP. Over residues 534–556 the composition is skewed to low complexity; it reads KDGLPGPQGPPGFQGLQGTVGEP. The span at 571-585 shows a compositional bias: pro residues; sequence PGMPGPKGPPGPPGP. 3 disulfides stabilise this stretch: C607–C618, C635–C730, and C708–C722. A C-type lectin domain is found at 614-731; that stretch reads FTDKCYYFSV…CDEINNFICE (118 aa). Residues F644, N646, E650, D670, and E674 each contribute to the Ca(2+) site. 3 residues coordinate a carbohydrate: K691, Q694, and D696. Residues Q694, D696, N697, E706, D707, N718, D719, and E731 each coordinate Ca(2+). E706 contacts a carbohydrate. The a carbohydrate site is built by N718 and D719.

The extracellular domain forms a stable trimer. The extracellular domain interacts with fibrillar amyloid-beta peptide. In terms of tissue distribution, highly expressed in lung, spleen, small and large intestine, stomach and brain. Expressed in neonatal microglia.

It localises to the membrane. Functionally, scavenger receptor that displays several functions associated with host defense. Promotes binding and phagocytosis of Gram-positive, Gram-negative bacteria and yeast. Mediates the recognition, internalization and degradation of oxidatively modified low density lipoprotein (oxLDL) by vascular endothelial cells. Binds to several carbohydrates including Gal-type ligands, D-galactose, L- and D-fucose, GalNAc, T and Tn antigens in a calcium-dependent manner and internalizes specifically GalNAc in nurse-like cells. Also binds to sialyl Lewis X or a trisaccharide and asialo-orosomucoid (ASOR). This chain is Collectin-12 (Colec12), found in Rattus norvegicus (Rat).